Consider the following 206-residue polypeptide: Dephospho-CoA kinase (206 aa).

The region spanning 4 to 200 (IVALTGGIGS…HRYLKLATAA (197 aa)) is the DPCK domain. 12–17 (GSGKST) serves as a coordination point for ATP.

This sequence belongs to the CoaE family.

Its subcellular location is the cytoplasm. The catalysed reaction is 3'-dephospho-CoA + ATP = ADP + CoA + H(+). Its pathway is cofactor biosynthesis; coenzyme A biosynthesis; CoA from (R)-pantothenate: step 5/5. Catalyzes the phosphorylation of the 3'-hydroxyl group of dephosphocoenzyme A to form coenzyme A. The protein is Dephospho-CoA kinase of Yersinia pestis.